We begin with the raw amino-acid sequence, 338 residues long: Fructose-1,6-bisphosphatase class 1 (338 aa).

Residues glutamate 91, aspartate 113, leucine 115, and aspartate 116 each coordinate Mg(2+). Substrate contacts are provided by residues 116-119 (DGSS), asparagine 211, tyrosine 244, and lysine 277. Glutamate 283 is a Mg(2+) binding site.

The protein belongs to the FBPase class 1 family. Homotetramer. Mg(2+) is required as a cofactor.

The protein resides in the cytoplasm. The enzyme catalyses beta-D-fructose 1,6-bisphosphate + H2O = beta-D-fructose 6-phosphate + phosphate. Its pathway is carbohydrate biosynthesis; gluconeogenesis. The polypeptide is Fructose-1,6-bisphosphatase class 1 (Oleidesulfovibrio alaskensis (strain ATCC BAA-1058 / DSM 17464 / G20) (Desulfovibrio alaskensis)).